The chain runs to 775 residues: Tumor necrosis factor alpha-induced protein 3 (775 aa).

At Ala-2 the chain carries N-acetylalanine. The TRAF-binding stretch occupies residues 58–300; sequence PQFREIIHKA…LTDPENEMKE (243 aa). The region spanning 92 to 263 is the OTU domain; that stretch reads LVALKTNGDG…SQHFVPLVTL (172 aa). Asp-100 is a catalytic residue. Cys-103 functions as the Nucleophile in the catalytic mechanism. 3 interaction with ubiquitin regions span residues 157 to 159, 190 to 192, and 224 to 227; these read LCY, SLE, and FAPL. His-256 functions as the Proton acceptor in the catalytic mechanism. The interaction with TNIP1 stretch occupies residues 369–775; sequence AQNPLEPSTP…ECYQFKQMYG (407 aa). The segment at 381–416 adopts an A20-type 1 zinc-finger fold; it reads SLMDIKCETPNCPFFMSVNTQPLCHECSERRQKNQS. Positions 386 to 445 are interaction with RIPK1; that stretch reads KCETPNCPFFMSVNTQPLCHECSERRQKNQSKLPKLNSKLGPEGLPGVGLGSSNWSPEET. Cys-387, Cys-392, Cys-404, and Cys-407 together coordinate Zn(2+). Residues 415–455 form a disordered region; sequence QSKLPKLNSKLGPEGLPGVGLGSSNWSPEETAGGPHSAPPT. The residue at position 451 (Ser-451) is a Phosphoserine. 2 A20-type zinc fingers span residues 464-499 and 500-533; these read ETTA…NASH and TADP…AEPS. Residues Cys-470, Cys-475, Cys-487, Cys-490, Cys-506, Cys-509, Cys-521, and Cys-524 each contribute to the Zn(2+) site. Residues 567 to 580 are compositionally biased toward polar residues; sequence TGNVSPSGCLSQAA. The tract at residues 567–590 is disordered; it reads TGNVSPSGCLSQAARTPGDRAGTS. A20-type zinc fingers lie at residues 586–621, 636–671, 695–730, and 741–775; these read RAGT…ENKQ, FQNN…NQRF, VASR…RVGS, and EPPK…QMYG. The required for proteasomal degradation of UBE2N and UBE2D3, TRAF6 deubiquitination, and TAX1BP1 interaction with UBE2N stretch occupies residues 590 to 640; the sequence is SKCRKAGCMYFGTPENKGFCTLCFIEYRENKQSVTASEKAGSPAPRFQNNV. The tract at residues 591–775 is sufficient for inhibitory activity of TNF-induced NF-kappa-B activity; sequence KCRKAGCMYF…ECYQFKQMYG (185 aa). 16 residues coordinate Zn(2+): Cys-592, Cys-597, Cys-609, Cys-612, Cys-642, Cys-647, Cys-659, Cys-662, Cys-701, Cys-706, Cys-718, Cys-721, Cys-747, Cys-752, Cys-764, and Cys-767. The segment at 682–775 is required for lysosomal localization and for TRAF2 lysosomal degradation; it reads RSSQHRDMPR…ECYQFKQMYG (94 aa).

It belongs to the peptidase C64 family. As to quaternary structure, homodimer. Interacts with TNIP1, TAX1BP1 and TRAF2. Interacts with RNF11, ITCH and TAX1BP1 only after TNF stimulation; these interaction are transient and they are lost after 1 hour of stimulation with TNF. Interacts with YWHAZ and YWHAH. Interacts with IKBKG; the interaction is induced by TNF stimulation and by polyubiquitin. Interacts with RIPK1. Interacts with UBE2N; the interaction requires TAX1BP1. Interacts with TRAF6. Found in most tissues during development. Strikingly high levels are found in lymphoid organs, including the thymus, spleen, and gut-associated lymphoid tissue. Constitutively expressed in immature and mature thymocyte subpopulations as well as in resting peripheral T-cells; activation of these leads to down-regulation.

Its subcellular location is the cytoplasm. The protein localises to the nucleus. The protein resides in the lysosome. The enzyme catalyses Thiol-dependent hydrolysis of ester, thioester, amide, peptide and isopeptide bonds formed by the C-terminal Gly of ubiquitin (a 76-residue protein attached to proteins as an intracellular targeting signal).. Functionally, ubiquitin-editing enzyme that contains both ubiquitin ligase and deubiquitinase activities. Involved in immune and inflammatory responses signaled by cytokines, such as TNF-alpha and IL-1 beta, or pathogens via Toll-like receptors (TLRs) through terminating NF-kappa-B activity. Essential component of a ubiquitin-editing protein complex, comprising also RNF11, ITCH and TAX1BP1, that ensures the transient nature of inflammatory signaling pathways. In cooperation with TAX1BP1 promotes disassembly of E2-E3 ubiquitin protein ligase complexes in IL-1R and TNFR-1 pathways; affected are at least E3 ligases TRAF6, TRAF2 and BIRC2, and E2 ubiquitin-conjugating enzymes UBE2N and UBE2D3. In cooperation with TAX1BP1 promotes ubiquitination of UBE2N and proteasomal degradation of UBE2N and UBE2D3. Upon TNF stimulation, deubiquitinates 'Lys-63'-polyubiquitin chains on RIPK1 and catalyzes the formation of 'Lys-48'-polyubiquitin chains. This leads to RIPK1 proteasomal degradation and consequently termination of the TNF- or LPS-mediated activation of NF-kappa-B. Deubiquitinates TRAF6 probably acting on 'Lys-63'-linked polyubiquitin. Upon T-cell receptor (TCR)-mediated T-cell activation, deubiquitinates 'Lys-63'-polyubiquitin chains on MALT1 thereby mediating disassociation of the CBM (CARD11:BCL10:MALT1) and IKK complexes and preventing sustained IKK activation. Deubiquitinates NEMO/IKBKG; the function is facilitated by TNIP1 and leads to inhibition of NF-kappa-B activation. Upon stimulation by bacterial peptidoglycans, probably deubiquitinates RIPK2. Can also inhibit I-kappa-B-kinase (IKK) through a non-catalytic mechanism which involves polyubiquitin; polyubiquitin promotes association with IKBKG and prevents IKK MAP3K7-mediated phosphorylation. Targets TRAF2 for lysosomal degradation. In vitro able to deubiquitinate 'Lys-11'-, 'Lys-48'- and 'Lys-63' polyubiquitin chains. Inhibitor of programmed cell death. Has a role in the function of the lymphoid system. Required for LPS-induced production of pro-inflammatory cytokines and IFN beta in LPS-tolerized macrophages. This is Tumor necrosis factor alpha-induced protein 3 (Tnfaip3) from Mus musculus (Mouse).